The sequence spans 149 residues: Arginine repressor (149 aa).

This sequence belongs to the ArgR family.

It is found in the cytoplasm. Its pathway is amino-acid biosynthesis; L-arginine biosynthesis [regulation]. In terms of biological role, regulates arginine biosynthesis genes. The sequence is that of Arginine repressor from Bacillus velezensis (strain DSM 23117 / BGSC 10A6 / LMG 26770 / FZB42) (Bacillus amyloliquefaciens subsp. plantarum).